The following is a 254-amino-acid chain: Receptor expression-enhancing protein 2 (254 aa).

Transmembrane regions (helical) follow at residues 1-21 (MVSWIISRLVVLIFGTLYPAY) and 35-55 (YVKWMMYWIVFAFFTTAETLT). A Phosphoserine modification is found at Ser-152. Residues 194–254 (LSLRSSTSQP…KKSSGGGDSA (61 aa)) are disordered. Residues 205 to 219 (PRTETSEDDLGDKAP) show a composition bias toward basic and acidic residues.

The protein belongs to the DP1 family. As to quaternary structure, interacts with odorant receptor proteins.

Its subcellular location is the membrane. In terms of biological role, required for endoplasmic reticulum (ER) network formation, shaping and remodeling. May enhance the cell surface expression of odorant receptors. This is Receptor expression-enhancing protein 2 (Reep2) from Mus musculus (Mouse).